Consider the following 582-residue polypeptide: BTB/POZ domain and ankyrin repeat-containing protein NPR1 (582 aa).

The span at 1-18 (MEPPTSHVTNAFSDSDSA) shows a compositional bias: polar residues. The disordered stretch occupies residues 1-25 (MEPPTSHVTNAFSDSDSASVEEGGA). The BTB domain occupies 55–140 (ADARIAVPGG…VLDYLYSGRV (86 aa)). The C2HC NPR-type zinc finger occupies 147 to 161 (ACLCVDEDCAHVGCH). Zn(2+)-binding residues include Cys-150, Cys-155, His-157, and Cys-160. ANK repeat units follow at residues 229–258 (RSNL…SLGL), 269–299 (KHVR…NLDD), 301–328 (FALH…DVNH), and 332–361 (RGYT…RPAD). A salicylic acid-binding core (SBC) region spans residues 391 to 526 (PSPKDRLCIE…VLDKIMDDET (136 aa)). Arg-436 is a binding site for salicylate. A disordered region spans residues 551 to 582 (QKAFHEDKEENDRSGLSSSSSSTSIGAIRPRR). The span at 553–563 (AFHEDKEENDR) shows a compositional bias: basic and acidic residues. The segment covering 564 to 574 (SGLSSSSSSTS) has biased composition (low complexity).

Belongs to the plant 'ANKYRIN-BTB/POZ' family. 'NPR1-like' subfamily. Oligomer in an uninduced state; disulfide-linked. Forms activated monomer upon changes in cellular redox potential. Interacts with TGA2.1, TGA2.2, TGA2.3, LG2, TGAL1 and TGAL4. Interacts with NRR, RH1, RH2 and RH3.

It localises to the cytoplasm. It is found in the nucleus. Its subcellular location is the nuclear body. The protein operates within protein modification; protein ubiquitination. In terms of biological role, salicylic acid (SA)-binding substrate-specific adapter of an E3 ubiquitin-protein ligase complex (CUL3-RBX1-BTB) which mediates the ubiquitination and subsequent proteasomal degradation of target proteins. Transcription cofactor that represses gene expression in the absence of salicylic acid (SA), when attached to negative cis-elements (W-box) with WRKY transcription factors, but stimulates gene expression upon activation by SA, when sumoylated and attached to positive cis-elements (as-1) with TGA transcription factors, thus confering immunity through a series of gene regulations ending in a significant increase in antimicrobial and defense genes expression. Key positive factor of disease resistance. Plays an essential role in benzothiadiazole (BTH)-induced resistance to the blast fungus disease caused by Magnaporthe oryzae. Involved in defense response against the bacterial blight disease caused by Xanthomonas oryzae pv. oryzae (Xoo). Over-expression of NPR1/NH1 confers disease resistance to Xoo, but also enhances herbivore susceptibility. Functions as a transcriptional coactivator of TGA2.1 and LG2 in vitro. Involved in defense response against herbivore. Plants silencing NPR1/NH1 have increased herbivore-induced trypsin proteinase inhibitors and volatiles, which reduces the performance of the striped stem borer (SSB) Chilo suppressalis. This is BTB/POZ domain and ankyrin repeat-containing protein NPR1 from Oryza sativa subsp. japonica (Rice).